Reading from the N-terminus, the 356-residue chain is Histidinol-phosphate aminotransferase (356 aa).

Lys208 is modified (N6-(pyridoxal phosphate)lysine).

Belongs to the class-II pyridoxal-phosphate-dependent aminotransferase family. Histidinol-phosphate aminotransferase subfamily. As to quaternary structure, homodimer. The cofactor is pyridoxal 5'-phosphate.

The enzyme catalyses L-histidinol phosphate + 2-oxoglutarate = 3-(imidazol-4-yl)-2-oxopropyl phosphate + L-glutamate. The protein operates within amino-acid biosynthesis; L-histidine biosynthesis; L-histidine from 5-phospho-alpha-D-ribose 1-diphosphate: step 7/9. In Lactococcus lactis subsp. cremoris (strain SK11), this protein is Histidinol-phosphate aminotransferase.